We begin with the raw amino-acid sequence, 228 residues long: Cytidylate kinase (228 aa).

Position 10 to 18 (10 to 18 (GPSGSGKGT)) interacts with ATP.

Belongs to the cytidylate kinase family. Type 1 subfamily.

It is found in the cytoplasm. It carries out the reaction CMP + ATP = CDP + ADP. The catalysed reaction is dCMP + ATP = dCDP + ADP. In Acinetobacter baumannii (strain ACICU), this protein is Cytidylate kinase.